The chain runs to 737 residues: Procollagen-lysine,2-oxoglutarate 5-dioxygenase 2 (737 aa).

The N-terminal stretch at 1-25 (MGGCTVKPQLLLLALVLHPWNPCLG) is a signal peptide. N-linked (GlcNAc...) asparagine glycans are attached at residues Asn-63, Asn-209, and Asn-297. Thr-320 bears the Phosphothreonine mark. The residue at position 323 (Tyr-323) is a Phosphotyrosine. N-linked (GlcNAc...) asparagine glycans are attached at residues Asn-365 and Asn-522. In terms of domain architecture, Fe2OG dioxygenase spans 644–737 (KGFALLNFVV…RYIAVSFIDP (94 aa)). 2 residues coordinate Fe cation: His-666 and Asp-668. The N-linked (GlcNAc...) asparagine glycan is linked to Asn-696. Lys-704 bears the N6-succinyllysine mark. His-718 contributes to the Fe cation binding site. An N-linked (GlcNAc...) asparagine glycan is attached at Asn-725. Residue Arg-728 is part of the active site.

Homodimer. Requires Fe(2+) as cofactor. The cofactor is L-ascorbate. In terms of tissue distribution, highly expressed in pancreas and muscle. Isoform 1 and isoform 2 are expressed in the majority of the examined cell types. Isoform 2 is specifically expressed in skin, lung, dura and aorta.

The protein resides in the rough endoplasmic reticulum membrane. It carries out the reaction L-lysyl-[collagen] + 2-oxoglutarate + O2 = (5R)-5-hydroxy-L-lysyl-[collagen] + succinate + CO2. Its function is as follows. Forms hydroxylysine residues in -Xaa-Lys-Gly- sequences in collagens. These hydroxylysines serve as sites of attachment for carbohydrate units and are essential for the stability of the intermolecular collagen cross-links. The sequence is that of Procollagen-lysine,2-oxoglutarate 5-dioxygenase 2 from Homo sapiens (Human).